Reading from the N-terminus, the 108-residue chain is MKFVVWPSEIDSRLPRKYGRLVKKEVALEAPTPEEIRDAAEILGMKVIEFEPEKLNPRLSGIDEELRTKGMLRIESPYPKGKSLRMICEKIRELRAKKRKAHGKRKKR.

Belongs to the SRP19 family. As to quaternary structure, part of the signal recognition particle protein translocation system, which is composed of SRP and FtsY. Archaeal SRP consists of a 7S RNA molecule of 300 nucleotides and two protein subunits: SRP54 and SRP19.

The protein resides in the cytoplasm. Its function is as follows. Involved in targeting and insertion of nascent membrane proteins into the cytoplasmic membrane. Binds directly to 7S RNA and mediates binding of the 54 kDa subunit of the SRP. This is Signal recognition particle 19 kDa protein from Thermococcus kodakarensis (strain ATCC BAA-918 / JCM 12380 / KOD1) (Pyrococcus kodakaraensis (strain KOD1)).